We begin with the raw amino-acid sequence, 263 residues long: tRNA (guanine-N(1)-)-methyltransferase (263 aa).

S-adenosyl-L-methionine is bound by residues Gly124 and 144–149 (LGDFVL).

The protein belongs to the RNA methyltransferase TrmD family. Homodimer.

The protein localises to the cytoplasm. It carries out the reaction guanosine(37) in tRNA + S-adenosyl-L-methionine = N(1)-methylguanosine(37) in tRNA + S-adenosyl-L-homocysteine + H(+). Specifically methylates guanosine-37 in various tRNAs. This chain is tRNA (guanine-N(1)-)-methyltransferase, found in Aromatoleum aromaticum (strain DSM 19018 / LMG 30748 / EbN1) (Azoarcus sp. (strain EbN1)).